We begin with the raw amino-acid sequence, 489 residues long: Rhamnulokinase (489 aa).

Residue 13–17 (ASSGR) coordinates ATP. C68 and C222 are oxidised to a cystine. Residues G83 and 236–238 (HDT) contribute to the substrate site. D237 (proton acceptor) is an active-site residue. Position 259 (T259) interacts with ATP. N296 contributes to the substrate binding site. Q304 serves as a coordination point for ATP. Cysteines 353 and 370 form a disulfide. An ATP-binding site is contributed by G402. Cysteines 413 and 417 form a disulfide.

It belongs to the rhamnulokinase family. In terms of assembly, monomer. The cofactor is Mg(2+).

It carries out the reaction L-rhamnulose + ATP = L-rhamnulose 1-phosphate + ADP + H(+). The protein operates within carbohydrate degradation; L-rhamnose degradation; glycerone phosphate from L-rhamnose: step 2/3. In terms of biological role, involved in the catabolism of L-rhamnose (6-deoxy-L-mannose). Catalyzes the transfer of the gamma-phosphate group from ATP to the 1-hydroxyl group of L-rhamnulose to yield L-rhamnulose 1-phosphate. This is Rhamnulokinase from Escherichia coli O127:H6 (strain E2348/69 / EPEC).